Reading from the N-terminus, the 474-residue chain is L-arabinose isomerase (474 aa).

Mn(2+)-binding residues include Glu-306, Glu-331, His-348, and His-447.

The protein belongs to the arabinose isomerase family. Mn(2+) serves as cofactor.

It catalyses the reaction beta-L-arabinopyranose = L-ribulose. It participates in carbohydrate degradation; L-arabinose degradation via L-ribulose; D-xylulose 5-phosphate from L-arabinose (bacterial route): step 1/3. In terms of biological role, catalyzes the conversion of L-arabinose to L-ribulose. This is L-arabinose isomerase from Pediococcus pentosaceus (strain ATCC 25745 / CCUG 21536 / LMG 10740 / 183-1w).